The following is a 117-amino-acid chain: Large ribosomal subunit protein bL19 (117 aa).

This sequence belongs to the bacterial ribosomal protein bL19 family.

In terms of biological role, this protein is located at the 30S-50S ribosomal subunit interface and may play a role in the structure and function of the aminoacyl-tRNA binding site. This is Large ribosomal subunit protein bL19 from Shewanella denitrificans (strain OS217 / ATCC BAA-1090 / DSM 15013).